The following is a 363-amino-acid chain: UDP-N-acetylglucosamine--N-acetylmuramyl-(pentapeptide) pyrophosphoryl-undecaprenol N-acetylglucosamine transferase (363 aa).

Residues Thr-10–Gly-12, Asn-124, Ser-195, Ile-250, and Gln-295 contribute to the UDP-N-acetyl-alpha-D-glucosamine site.

The protein belongs to the glycosyltransferase 28 family. MurG subfamily.

The protein localises to the cell membrane. It carries out the reaction Mur2Ac(oyl-L-Ala-gamma-D-Glu-L-Lys-D-Ala-D-Ala)-di-trans,octa-cis-undecaprenyl diphosphate + UDP-N-acetyl-alpha-D-glucosamine = beta-D-GlcNAc-(1-&gt;4)-Mur2Ac(oyl-L-Ala-gamma-D-Glu-L-Lys-D-Ala-D-Ala)-di-trans,octa-cis-undecaprenyl diphosphate + UDP + H(+). It functions in the pathway cell wall biogenesis; peptidoglycan biosynthesis. Its function is as follows. Cell wall formation. Catalyzes the transfer of a GlcNAc subunit on undecaprenyl-pyrophosphoryl-MurNAc-pentapeptide (lipid intermediate I) to form undecaprenyl-pyrophosphoryl-MurNAc-(pentapeptide)GlcNAc (lipid intermediate II). The protein is UDP-N-acetylglucosamine--N-acetylmuramyl-(pentapeptide) pyrophosphoryl-undecaprenol N-acetylglucosamine transferase of Lactiplantibacillus plantarum (strain ATCC BAA-793 / NCIMB 8826 / WCFS1) (Lactobacillus plantarum).